The chain runs to 122 residues: Large ribosomal subunit protein uL14 (122 aa).

It belongs to the universal ribosomal protein uL14 family. As to quaternary structure, part of the 50S ribosomal subunit. Forms a cluster with proteins L3 and L19. In the 70S ribosome, L14 and L19 interact and together make contacts with the 16S rRNA in bridges B5 and B8.

Binds to 23S rRNA. Forms part of two intersubunit bridges in the 70S ribosome. This is Large ribosomal subunit protein uL14 from Desulfitobacterium hafniense (strain DSM 10664 / DCB-2).